A 1865-amino-acid polypeptide reads, in one-letter code: MLLPATGASRSAAIMSDTDSDEDSSGGGPFSLTGFLFGNINGAGQLEGESVLDDECKKHLAGLGALGLGSLITELTANEELAGTDGALVNDEGWIRSREDAVDYSDINEVAEDESRRYQQTMGSLQPLCHSADYDEDDYDADCEDIDCKLMPPPPPPPGPVKKEKDQDGLTGEKVDFSSSSDSESEMGPQEAAQAESKDGKLTLPLAGIMQHDATKLLPSVTELFPEFRPGKVLRFLRLFGPGKNVPSVWRSARRKRKKKHREPIQEEQIQEEECSVELEVNQKSLWNYDYAPPPPPEQCLSDDEITMMAPVESKFSQSTGDTDKVMDTKPRVAEWRYGPARLWYDMLGVPEDGSGFDYGFKMRKTEHEPAIKCKMMTKLRKLEESNGIDLLADENFLMVTQLHWEDDIIWDGEDVKHKGTKPQRASLAGWLPSSMTRNAMAYNVQQGFAATLDDDKPWYSIFPIDNEDLVYGRWEDNIIWDAQAMPRILEPPVLTLDPNDENLILEIPDEKEEATSNSPSKENKKESSLKKSRILLGKTGVIKEEPQQNMSQPEVKDPWNLSNDEYYYPKQQGLRGTFGGNIIQHSIPAVELRQPFFPTHMGPIKLRQFHRPPLKKYSFGALSQPGPHSVQPLLKHIKKKAKMREQERQASGGGEMFFMRTPQDLTGKDGDLILAEYSEENGPLMMQVGMATKIKNYYKRKPGKDPGAPDCKYGETVYCHTSPFLGSLHPGQLLQAFENNLFRAPIYLHKMPETDFLIIRTRQGYYIRELVDIFVVGQQCPLFEVPGPNSKRANTHIRDFLQVFIYRLFWKSKDRPRRIRMEDIKKAFPSHSESSIRKRLKLCADFKRTGMDSNWWVLKSDFRLPTEEEIRAMVSPEQCCAYYSMIAAEQRLKDAGYGEKSFFAPEEENEEDFQMKIDDEVRTAPWNTTRAFIAAMKGKCLLEVTGVADPTGCGEGFSYVKIPNKPTQQKDDKEPQPVKKTVTGTDADLRRLSLKNAKQLLRKFGVPEEEIKKLSRWEVIDVVRTMSTEQARSGEGPMSKFARGSRFSVAEHQERYKEECQRIFDLQNKVLSSTEVLSTDTDSSSAEDSDFEEMGKNIENMLQNKKTSSQLSREREEQERKELQRMLLAAGSASAGNNHRDDDTASVTSLNSSATGRCLKIYRTFRDEEGKEYVRCETVRKPAVIDAYVRIRTTKDEEFIRKFALFDEQHREEMRKERRRIQEQLRRLKRNQEKEKLKGPPEKKPKKMKERPDLKLKCGACGAIGHMRTNKFCPLYYQTNAPPSNPVAMTEEQEEELEKTVIHNDNEELIKVEGTKIVLGKQLIESADEVRRKSLVLKFPKQQLPPKKKRRVGTTVHCDYLNRPHKSIHRRRTDPMVTLSSILESIINDMRDLPNTYPFHTPVNAKVVKDYYKIITRPMDLQTLRENVRKRLYPSREEFREHLELIVKNSATYNGPKHSLTQISQSMLDLCDEKLKEKEDKLARLEKAINPLLDDDDQVAFSFILDNIVTQKMMAVPDSWPFHHPVNKKFVPDYYKVIVSPMDLETIRKNISKHKYQSRESFLDDVNLILANSVKYNGSESQYTKTAQEIVNVCYQTLTEYDEHLTQLEKDICTAKEAALEEAELESLDPMTPGPYTPQPPDLYDNSTSLSVSRDASVYQDESNMSVLDIPSATSEKQLTQEGEDGDGDLADEEEGTVQQPQASVLYEDLLMSEGEDDEEDAGSDEEGDNPFSAIQLSESGSDSDVGSGSIRPKQPRVLQENTRMGMENEESMMSYEGDGGEVSRGLEDSNISYGSYEEPDPKSNTQDTSFSSIGGYEVSEEEEDEEEQRSGPSVLSQVHLSEDEEDSEDFHSIAGDSDMDSDE.

The tract at residues 1–27 (MLLPATGASRSAAIMSDTDSDEDSSGG) is disordered. The 409-residue stretch at 1-409 (MLLPATGASR…VTQLHWEDDI (409 aa)) folds into the Protein kinase 1 domain. At Ser131 the chain carries Phosphoserine; by autocatalysis. The interval 144-199 (EDIDCKLMPPPPPPPGPVKKEKDQDGLTGEKVDFSSSSDSESEMGPQEAAQAESKD) is disordered. A compositionally biased stretch (pro residues) spans 151–160 (MPPPPPPPGP). Residues 161–176 (VKKEKDQDGLTGEKVD) show a composition bias toward basic and acidic residues. Ser302 bears the Phosphoserine; by autocatalysis mark. Residues 509 to 530 (PDEKEEATSNSPSKENKKESSL) form a disordered region. Positions 512 to 971 (KEEATSNSPS…KIPNKPTQQK (460 aa)) are histone acetyltransferase (HAT). Lys539 carries the post-translational modification N6-acetyllysine. Glycyl lysine isopeptide (Lys-Gly) (interchain with G-Cter in SUMO2) cross-links involve residues Lys544 and Lys557. Disordered stretches follow at residues 964–983 (PNKPTQQKDDKEPQPVKKTV) and 1228–1252 (RLKRNQEKEKLKGPPEKKPKKMKER). 2 stretches are compositionally biased toward basic and acidic residues: residues 969 to 978 (QQKDDKEPQP) and 1228 to 1244 (RLKRNQEKEKLKGPPEK). Positions 1190–1268 (VRIRTTKDEE…CGACGAIGHM (79 aa)) form a DNA-binding region, HMG box. An interaction with ASF1A and ASF1B region spans residues 1337 to 1624 (VLKFPKQQLP…TAKEAALEEA (288 aa)). The Nuclear localization signal motif lies at 1346-1353 (PPKKKRRV). 2 Bromo domains span residues 1371-1479 (RRRT…LKEK) and 1493-1602 (LLDD…LTEY). The 446-residue stretch at 1420–1865 (MDLQTLRENV…AGDSDMDSDE (446 aa)) folds into the Protein kinase 2 domain. The disordered stretch occupies residues 1625–1865 (ELESLDPMTP…AGDSDMDSDE (241 aa)). Residues 1633 to 1642 (TPGPYTPQPP) are compositionally biased toward pro residues. The span at 1646-1682 (DNSTSLSVSRDASVYQDESNMSVLDIPSATSEKQLTQ) shows a compositional bias: polar residues. Ser1664 and Ser1667 each carry phosphoserine. 2 stretches are compositionally biased toward acidic residues: residues 1683-1697 (EGEDGDGDLADEEEG) and 1715-1730 (EGEDDEEDAGSDEEGD). A compositionally biased stretch (low complexity) spans 1739-1751 (SESGSDSDVGSGS). Ser1773, Ser1776, and Ser1794 each carry phosphoserine. A compositionally biased stretch (polar residues) spans 1804 to 1814 (KSNTQDTSFSS). The span at 1820–1829 (VSEEEEDEEE) shows a compositional bias: acidic residues. At Ser1821 the chain carries Phosphoserine. Residues 1832–1841 (SGPSVLSQVH) are compositionally biased toward polar residues.

Belongs to the TAF1 family. In terms of assembly, component of the TFIID basal transcription factor complex, composed of TATA-box-binding protein TBP, and a number of TBP-associated factors (TAFs), including TAF1, TAF2, TAF3, TAF4, TAF5, TAF6, TAF7, TAF8, TAF9, TAF10, TAF11, TAF12 and TAF13. Interacts with TAF7; the interaction is direct. TAF1, when part of the TFIID complex, interacts with C-terminus of TP53. Part of a TFIID-containing RNA polymerase II pre-initiation complex that is composed of TBP and at least GTF2A1, GTF2A2, GTF2E1, GTF2E2, GTF2F1, GTF2H2, GTF2H3, GTF2H4, GTF2H5, GTF2B, TCEA1, ERCC2, ERCC3, TAF1, TAF2, TAF3, TAF4, TAF5, TAF6, TAF7, TAF8, TAF9, TAF10, TAF11, TAF12 and TAF13. Component of some MLL1/MLL complex, at least composed of the core components KMT2A/MLL1, ASH2L, HCFC1/HCF1, WDR5 and RBBP5, as well as the facultative components BACC1, CHD8, E2F6, HSP70, INO80C, KANSL1, LAS1L, MAX, MCRS1, MGA, KAT8/MOF, PELP1, PHF20, PRP31, RING2, RUVB1/TIP49A, RUVB2/TIP49B, SENP3, TAF1, TAF4, TAF6, TAF7, TAF9 and TEX10. RB1 interacts with the N-terminal domain of TAF1. Interacts with ASF1A and ASF1B. Interacts (via bromo domains) with acetylated lysine residues on the N-terminus of histone H1.4, H2A, H2B, H3 and H4 (in vitro). The cofactor is Mg(2+). Post-translationally, phosphorylated by casein kinase II in vitro.

It is found in the nucleus. The catalysed reaction is L-seryl-[protein] + ATP = O-phospho-L-seryl-[protein] + ADP + H(+). The enzyme catalyses L-threonyl-[protein] + ATP = O-phospho-L-threonyl-[protein] + ADP + H(+). It catalyses the reaction L-lysyl-[protein] + acetyl-CoA = N(6)-acetyl-L-lysyl-[protein] + CoA + H(+). With respect to regulation, autophosphorylates on Ser residues. Inhibited by retinoblastoma tumor suppressor protein, RB1. Binding to TAF1 or CIITA inhibits the histone acetyltransferase activity. Functionally, the TFIID basal transcription factor complex plays a major role in the initiation of RNA polymerase II (Pol II)-dependent transcription. TFIID recognizes and binds promoters with or without a TATA box via its subunit TBP, a TATA-box-binding protein, and promotes assembly of the pre-initiation complex (PIC). The TFIID complex consists of TBP and TBP-associated factors (TAFs), including TAF1, TAF2, TAF3, TAF4, TAF5, TAF6, TAF7, TAF8, TAF9, TAF10, TAF11, TAF12 and TAF13. TAF1 is the largest component and core scaffold of the TFIID complex, involved in nucleating complex assembly. TAF1 forms a promoter DNA binding subcomplex of TFIID, together with TAF7 and TAF2. Contains novel N- and C-terminal Ser/Thr kinase domains which can autophosphorylate or transphosphorylate other transcription factors. Phosphorylates TP53 on 'Thr-55' which leads to MDM2-mediated degradation of TP53. Phosphorylates GTF2A1 and GTF2F1 on Ser residues. Possesses DNA-binding activity. Essential for progression of the G1 phase of the cell cycle. This is Transcription initiation factor TFIID subunit 1 from Mesocricetus auratus (Golden hamster).